A 38-amino-acid chain; its full sequence is Large ribosomal subunit protein bL36 (38 aa).

Belongs to the bacterial ribosomal protein bL36 family.

The protein is Large ribosomal subunit protein bL36 of Buchnera aphidicola subsp. Cinara cedri (strain Cc).